Reading from the N-terminus, the 394-residue chain is Potassium channel subfamily K member 18 (394 aa).

Residues 1–31 lie on the Cytoplasmic side of the membrane; that stretch reads MEAEEPPEARRCCPEALGKARGCCPEALGKL. Residues 32–52 traverse the membrane as a helical segment; the sequence is LPGLCFLCCLVTYALVGAALF. Asparagine 83 carries N-linked (GlcNAc...) asparagine glycosylation. The segment at residues 114–140 is an intramembrane region (pore-forming); sequence FLSALFFCCTVFSTVGYGHMYPVTRLG. 4 residues coordinate K(+): threonine 127, valine 128, glycine 129, and tyrosine 130. The segment at 127–132 is selectivity filter 1; the sequence is TVGYGH. Residues 142 to 162 form a helical membrane-spanning segment; that stretch reads FLCMLYALFGIPLMFLVLTDI. Topologically, residues 163–292 are cytoplasmic; sequence GDILATILSR…EVGQQVERLD (130 aa). The tract at residues 210-215 is interaction with calcineurin; sequence PQIVID. The interval 261 to 266 is interaction with YWHAH; the sequence is RSNSCP. Phosphoserine is present on residues serine 264 and serine 276. The chain crosses the membrane as a helical span at residues 293-313; sequence IPLPVIALVVFAYISCAAAIL. An intramembrane region (pore-forming) is located at residues 326–340; the sequence is FYFCFVTLTTIGFGD. Residues 335 to 340 are selectivity filter 2; the sequence is TIGFGD. The chain crosses the membrane as a helical span at residues 347–367; the sequence is HFFLFFSIYIIVGMEILFIAF. Residues 368 to 394 lie on the Cytoplasmic side of the membrane; that stretch reads KLMQNRLLHTYKTLMLFVCQREVSLPW.

It belongs to the two pore domain potassium channel (TC 1.A.1.8) family. In terms of assembly, homodimer. Heterodimer with KCNK2. Heterodimer with KCNK10. Interacts with calcineurin. Interacts with YWHAH, in a phosphorylation-dependent manner. Phosphorylation of Ser-264 is required for the binding of 14-3-3eta/YWHAH. Calcineurin-mediated dephosphorylation of Ser-276 enhances channel activity. Post-translationally, N-glycosylated. As to expression, detected in brain cortex, cerebellum, dorsal root ganglion, spinal cord and testis. High expression in trigeminal ganglion (at protein level), also expressed in autonomic nervous system ganglia such as the stellate ganglion and paravertebral sympathetic ganglia. Expressed in all adult spinal cord and brain regions, with slightly higher expression in thalamus, hypothalamus, hippocampus and posterior corte (at protein level). In non-neuronal tissues, substantial expression found in lung and heart and weal expression in liver, testis, kidney, small intestine and spleen. Expressed in regulatory T cells (at protein level).

The protein resides in the cell membrane. The enzyme catalyses K(+)(in) = K(+)(out). Activated upon cell stimulation via Ca(2+)-mobilizing receptors, such as CHRM1/M1 muscarinic receptor and AGTR1/AT1a angiotensin receptor. Activated by volatile anesthetics, such as isoflurane and inhibited by local anesthetics such as bupivacaine and lidocaine. Inhibited by extracellular acidic pH. Inhibited by Zn(2+) ions. Inhibited by hydroxy-alpha-sanshool, an ingredient of Schezuan pepper. Inhibited by Ba(2+) ions. Functionally, k(+) channel that conducts outward and inward rectifying currents at depolarized and hyperpolarized membrane potentials, respectively. The outward rectifying currents are voltage-dependent, coupled to K(+) electrochemical gradient across the membrane, whereas the inward currents can be induced in response to activation of Ca(2+)-mobilizing receptors. Homo- and heterodimerizes to form functional channels with distinct regulatory and gating properties. In trigeminal ganglia sensory neurons, the heterodimers of KCNK18/TRESK and KCNK2/TREK-1 or KCNK10/TREK-2 inhibit neuronal firing and neurogenic inflammation by stabilizing the resting membrane potential at K(+) equilibrium potential as well as by regulating the threshold of action potentials and the spike frequency. In thymocytes, conducts K(+) currents upon T cell receptor (TCR) signaling leading to sustained Ca(2+) influx and NF-kappa-B activation, FOXP3 transcription and positive selection of regulatory T cell (Treg) progenitor subsets. Appears to mediate the analgesics effects of hydroxy-alpha-sanshool, a metabolite naturally present in Schezuan pepper and other Xanthoxylum plants. In Mus musculus (Mouse), this protein is Potassium channel subfamily K member 18.